Consider the following 587-residue polypeptide: Beta-(1--&gt;2)glucan export ATP-binding/permease protein NdvA (587 aa).

Residues 21–301 (VSLVVIANIV…MRQFATQIFE (281 aa)) form the ABC transmembrane type-1 domain. Transmembrane regions (helical) follow at residues 23 to 43 (LVVI…ILFG), 57 to 77 (PILF…VLVS), 126 to 146 (LFGL…ALAL), 158 to 178 (LSAV…VVMS), 248 to 268 (MAST…VQSG), and 272 to 292 (IGDV…LDLM). An ABC transporter domain is found at 335–569 (IEFRDVSFGF…NGRFAALLRA (235 aa)). Position 368-375 (368-375 (GPTGAGKT)) interacts with ATP.

This sequence belongs to the ABC transporter superfamily. Beta-(1--&gt;2)glucan exporter (TC 3.A.1.108.1) family. As to quaternary structure, homodimer.

It is found in the cell inner membrane. The catalysed reaction is [(1-&gt;2)-beta-D-glucosyl](n)(in) + ATP + H2O = [(1-&gt;2)-beta-D-glucosyl](n)(out) + ADP + phosphate + H(+). Functionally, involved in beta-(1--&gt;2)glucan export. Transmembrane domains (TMD) form a pore in the inner membrane and the ATP-binding domain (NBD) is responsible for energy generation. This chain is Beta-(1--&gt;2)glucan export ATP-binding/permease protein NdvA, found in Rhizobium etli (strain ATCC 51251 / DSM 11541 / JCM 21823 / NBRC 15573 / CFN 42).